Here is a 418-residue protein sequence, read N- to C-terminus: Putative ion-transport protein YfeO (418 aa).

A run of 12 helical transmembrane segments spans residues 10 to 30, 54 to 74, 99 to 119, 120 to 140, 149 to 169, 186 to 206, 223 to 243, 258 to 278, 300 to 320, 322 to 342, 343 to 363, and 371 to 391; these read LLLS…LIVV, DSPF…GLVI, ALPG…SLGP, EHPI…RLLP, ILAS…AALI, LFAP…FFHP, ILSG…AVWC, VLML…AGPV, DYFL…ASGF, GGRI…LHEH, VPAV…VLVV, and LFMA…CIVM.

It belongs to the chloride channel (TC 2.A.49) family.

It localises to the cell membrane. The sequence is that of Putative ion-transport protein YfeO from Escherichia coli O7:K1 (strain IAI39 / ExPEC).